Consider the following 375-residue polypeptide: Chaperone protein DnaJ (375 aa).

Positions 4–68 (DYYEVLGVGK…QKRAQYDRFG (65 aa)) constitute a J domain. A CR-type zinc finger spans residues 129–211 (GKETDVEIPK…CRGSGRVKVR (83 aa)). Cys142, Cys145, Cys159, Cys162, Cys185, Cys188, Cys199, and Cys202 together coordinate Zn(2+). 4 CXXCXGXG motif repeats span residues 142–149 (CDTCHGSG), 159–166 (CKTCSGTG), 185–192 (CTTCEGKG), and 199–206 (CSSCRGSG). The tract at residues 349-375 (LSGEKPGQHGGEDEGFFEKMKRAFRGE) is disordered.

Belongs to the DnaJ family. Homodimer. It depends on Zn(2+) as a cofactor.

It localises to the cytoplasm. Its function is as follows. Participates actively in the response to hyperosmotic and heat shock by preventing the aggregation of stress-denatured proteins and by disaggregating proteins, also in an autonomous, DnaK-independent fashion. Unfolded proteins bind initially to DnaJ; upon interaction with the DnaJ-bound protein, DnaK hydrolyzes its bound ATP, resulting in the formation of a stable complex. GrpE releases ADP from DnaK; ATP binding to DnaK triggers the release of the substrate protein, thus completing the reaction cycle. Several rounds of ATP-dependent interactions between DnaJ, DnaK and GrpE are required for fully efficient folding. Also involved, together with DnaK and GrpE, in the DNA replication of plasmids through activation of initiation proteins. The sequence is that of Chaperone protein DnaJ from Brevibacillus choshinensis.